Here is a 404-residue protein sequence, read N- to C-terminus: Lupus La protein homolog (404 aa).

The region spanning 7 to 99 is the HTH La-type RNA-binding domain; sequence NEKMAALEAK…RRSPSKPLPE (93 aa). Phosphoserine is present on residues serine 92 and serine 94. An RRM domain is found at 111-187; it reads RSVYIKGFPT…TDLLILFKED (77 aa). Lysine 116 is modified (N6-acetyllysine). Threonine 120 is modified (phosphothreonine). Lysine 128 bears the N6-acetyllysine mark. Serine 225 carries the post-translational modification Phosphoserine. The xRRM domain occupies 227-348; sequence EEKIGCLLKF…KGKGNKAAQA (122 aa). 2 positions are modified to N6-acetyllysine: lysine 328 and lysine 341. Residues 329-342 are compositionally biased toward basic residues; sequence WKSKGRRFKGKGKG. The tract at residues 329-404 is disordered; the sequence is WKSKGRRFKG…QKTENGAGDQ (76 aa). Over residues 343 to 354 the composition is skewed to low complexity; sequence NKAAQAGSAKGK. Lysine 360 carries the N6-acetyllysine modification. Threonine 362 bears the Phosphothreonine mark. Phosphoserine is present on serine 366. Over residues 381 to 391 the composition is skewed to basic and acidic residues; it reads RAREETDKEPP.

As to quaternary structure, interacts with DDX15. May interact with RUFY1. In terms of processing, phosphorylated in the C-terminal part of the protein.

It is found in the nucleus. In terms of biological role, binds to the 3' poly(U) terminus of nascent RNA polymerase III transcripts, protecting them from exonuclease digestion and facilitating their folding and maturation. In Bos taurus (Bovine), this protein is Lupus La protein homolog (SSB).